Here is a 714-residue protein sequence, read N- to C-terminus: Fatty acid oxidation complex subunit alpha (714 aa).

Residues 1–190 (MEMASAFTLN…KLGLVDDVVP (190 aa)) form an enoyl-CoA hydratase region. The interval 306–714 (APLNSVGILG…FWKTTATDLQ (409 aa)) is 3-hydroxyacyl-CoA dehydrogenase.

The protein in the N-terminal section; belongs to the enoyl-CoA hydratase/isomerase family. This sequence in the central section; belongs to the 3-hydroxyacyl-CoA dehydrogenase family. In terms of assembly, heterotetramer of two alpha chains (FadJ) and two beta chains (FadI).

The protein resides in the cytoplasm. It catalyses the reaction a (3S)-3-hydroxyacyl-CoA = a (2E)-enoyl-CoA + H2O. The catalysed reaction is a 4-saturated-(3S)-3-hydroxyacyl-CoA = a (3E)-enoyl-CoA + H2O. The enzyme catalyses a (3S)-3-hydroxyacyl-CoA + NAD(+) = a 3-oxoacyl-CoA + NADH + H(+). It carries out the reaction (3S)-3-hydroxybutanoyl-CoA = (3R)-3-hydroxybutanoyl-CoA. It participates in lipid metabolism; fatty acid beta-oxidation. Functionally, catalyzes the formation of a hydroxyacyl-CoA by addition of water on enoyl-CoA. Also exhibits 3-hydroxyacyl-CoA epimerase and 3-hydroxyacyl-CoA dehydrogenase activities. This is Fatty acid oxidation complex subunit alpha from Escherichia coli O17:K52:H18 (strain UMN026 / ExPEC).